Reading from the N-terminus, the 189-residue chain is Prostaglandin-H2 D-isomerase (189 aa).

Positions 1 to 24 (MAALRMLWMGLVLLGLLGFPQTPA) are cleaved as a signal peptide. At Gln25 the chain carries Pyrrolidone carboxylic acid. A glycan (N-linked (GlcNAc...) asparagine) is linked at Asn51. The active-site Nucleophile is the Cys65. An N-linked (GlcNAc...) asparagine glycan is attached at Asn78. A disulfide bridge connects residues Cys89 and Cys186.

Belongs to the calycin superfamily. Lipocalin family. In terms of assembly, monomer. Abundant in the brain and CNS, where it is expressed in tissues of the blood-brain barrier and secreted into the cerebro-spinal fluid. In the male reproductive system, it is expressed in the testis, efferent ducts and epididymis, and is secreted into the seminal fluid. In the eye, it is expressed in the pigmented epithelium of the retina and the nonpigmented epithelium of the ciliary body, and secreted into the aqueous humor. Low levels detected in various tissue fluids such as serum, normal urine, ascitic fluid and tear fluid. Also found in a number of other organs including the ear, heart and lung.

Its subcellular location is the rough endoplasmic reticulum. The protein localises to the nucleus membrane. It localises to the golgi apparatus. It is found in the cytoplasm. The protein resides in the perinuclear region. Its subcellular location is the secreted. The catalysed reaction is prostaglandin H2 = prostaglandin D2. In terms of biological role, catalyzes the conversion of PGH2 to PGD2, a prostaglandin involved in smooth muscle contraction/relaxation and a potent inhibitor of platelet aggregation. Involved in a variety of CNS functions, such as sedation, NREM sleep and PGE2-induced allodynia, and may have an anti-apoptotic role in oligodendrocytes. Binds small non-substrate lipophilic molecules, including biliverdin, bilirubin, retinal, retinoic acid and thyroid hormone, and may act as a scavenger for harmful hydrophobic molecules and as a secretory retinoid and thyroid hormone transporter. Possibly involved in development and maintenance of the blood-brain, blood-retina, blood-aqueous humor and blood-testis barrier. It is likely to play important roles in both maturation and maintenance of the central nervous system and male reproductive system. Involved in PLA2G3-dependent maturation of mast cells. PLA2G3 is secreted by immature mast cells and acts on nearby fibroblasts upstream to PTDGS to synthesize PGD2, which in turn promotes mast cell maturation and degranulation via PTGDR. The polypeptide is Prostaglandin-H2 D-isomerase (Ptgds) (Mus musculus (Mouse)).